The following is a 412-amino-acid chain: Maintenance of mitochondrial morphology protein 1 (412 aa).

Over Met1–Gly19 the chain is Lumenal. The helical transmembrane segment at Leu20–Phe40 threads the bilayer. Over Gly41–Thr412 the chain is Cytoplasmic. The SMP-LTD domain occupies Gln121–Pro337. The segment covering Ala372 to Arg384 has biased composition (basic and acidic residues). The interval Ala372–Thr412 is disordered.

This sequence belongs to the MMM1 family. As to quaternary structure, homodimer. Component of the ER-mitochondria encounter structure (ERMES) or MDM complex, composed of MMM1, MDM10, MDM12 and MDM34. An MMM1 homodimer associates with one molecule of MDM12 on each side in a pairwise head-to-tail manner, and the SMP-LTD domains of MMM1 and MDM12 generate a continuous hydrophobic tunnel for phospholipid trafficking.

The protein localises to the endoplasmic reticulum membrane. Functionally, component of the ERMES/MDM complex, which serves as a molecular tether to connect the endoplasmic reticulum (ER) and mitochondria. Components of this complex are involved in the control of mitochondrial shape and protein biogenesis, and function in nonvesicular lipid trafficking between the ER and mitochondria. The MDM12-MMM1 subcomplex functions in the major beta-barrel assembly pathway that is responsible for biogenesis of all outer membrane beta-barrel proteins, and acts in a late step after the SAM complex. The MDM10-MDM12-MMM1 subcomplex further acts in the TOM40-specific pathway after the action of the MDM12-MMM1 complex. Essential for establishing and maintaining the structure of mitochondria and maintenance of mtDNA nucleoids. In Podospora anserina (strain S / ATCC MYA-4624 / DSM 980 / FGSC 10383) (Pleurage anserina), this protein is Maintenance of mitochondrial morphology protein 1.